A 213-amino-acid polypeptide reads, in one-letter code: Coiled-coil domain-containing protein 43 (213 aa).

Residues 119 to 206 (RKEAVLAQYA…ERKDKEKKRT (88 aa)) adopt a coiled-coil conformation. The interval 127–213 (YANVTDDEDE…KRTQKGERKR (87 aa)) is disordered. The span at 131–142 (TDDEDEAEEEEQ) shows a compositional bias: acidic residues. Basic and acidic residues predominate over residues 169 to 200 (QRDQAKEDAQKKKEQDKMQREKDKLSKQERKD). Residues 201 to 213 (KEKKRTQKGERKR) are compositionally biased toward basic residues.

Belongs to the CCDC43 family.

The protein is Coiled-coil domain-containing protein 43 (ccdc43) of Danio rerio (Zebrafish).